A 60-amino-acid polypeptide reads, in one-letter code: UPF0434 protein KPN78578_09190 (60 aa).

Belongs to the UPF0434 family.

This is UPF0434 protein KPN78578_09190 from Klebsiella pneumoniae subsp. pneumoniae (strain ATCC 700721 / MGH 78578).